Reading from the N-terminus, the 103-residue chain is DNA-directed RNA polymerase subunit omega (103 aa).

This sequence belongs to the RNA polymerase subunit omega family. As to quaternary structure, the RNAP catalytic core consists of 2 alpha, 1 beta, 1 beta' and 1 omega subunit. When a sigma factor is associated with the core the holoenzyme is formed, which can initiate transcription.

It catalyses the reaction RNA(n) + a ribonucleoside 5'-triphosphate = RNA(n+1) + diphosphate. Promotes RNA polymerase assembly. Latches the N- and C-terminal regions of the beta' subunit thereby facilitating its interaction with the beta and alpha subunits. This is DNA-directed RNA polymerase subunit omega from Streptococcus agalactiae serotype III (strain NEM316).